Consider the following 344-residue polypeptide: Protein RecA (344 aa).

65–72 (GPESSGKT) lines the ATP pocket.

This sequence belongs to the RecA family.

The protein resides in the cytoplasm. In terms of biological role, can catalyze the hydrolysis of ATP in the presence of single-stranded DNA, the ATP-dependent uptake of single-stranded DNA by duplex DNA, and the ATP-dependent hybridization of homologous single-stranded DNAs. It interacts with LexA causing its activation and leading to its autocatalytic cleavage. This is Protein RecA from Nitratiruptor sp. (strain SB155-2).